The following is a 692-amino-acid chain: Hexamerin-1.1 (692 aa).

The signal sequence occupies residues 1–18; it reads MKLLILAVAISLAVLASG. N-linked (GlcNAc...) asparagine glycosylation occurs at asparagine 203.

The protein belongs to the hemocyanin family. In terms of assembly, homohexamer. Larval fat body.

The protein localises to the secreted. It is found in the extracellular space. Functionally, larval storage protein (LSP) which may serve as a store of amino acids for synthesis of adult proteins. The protein is Hexamerin-1.1 (HexA) of Anopheles gambiae (African malaria mosquito).